A 432-amino-acid polypeptide reads, in one-letter code: Adenylosuccinate synthetase (432 aa).

GTP contacts are provided by residues 13 to 19 and 41 to 43; these read GDEGKGK and GHT. Catalysis depends on Asp-14, which acts as the Proton acceptor. Mg(2+) contacts are provided by Asp-14 and Gly-41. Residues 14 to 17, 39 to 42, Thr-130, Arg-144, Gln-225, Thr-240, and Arg-304 each bind IMP; these read DEGK and NAGH. The active-site Proton donor is His-42. 300 to 306 provides a ligand contact to substrate; it reads ATTGRRR. Residues Arg-306, 332–334, and 415–417 each bind GTP; these read KLD and STG.

It belongs to the adenylosuccinate synthetase family. Homodimer. Mg(2+) serves as cofactor.

The protein resides in the cytoplasm. The enzyme catalyses IMP + L-aspartate + GTP = N(6)-(1,2-dicarboxyethyl)-AMP + GDP + phosphate + 2 H(+). It functions in the pathway purine metabolism; AMP biosynthesis via de novo pathway; AMP from IMP: step 1/2. Plays an important role in the de novo pathway of purine nucleotide biosynthesis. Catalyzes the first committed step in the biosynthesis of AMP from IMP. This is Adenylosuccinate synthetase from Salmonella heidelberg (strain SL476).